The sequence spans 444 residues: Coagulation factor VII (444 aa).

The N-terminal stretch at 1–21 (MAPQARGLGLCSLLALQASLA) is a signal peptide. The propeptide occupies 22–39 (AVFITQEEAHSVLRRQRR). The Gla domain maps to 40 to 84 (ANSFLEELRPGSLERECKEELCSFEEAREVFQSTERTKQFWITYN). 4-carboxyglutamate occurs at positions 45, 46, 53, 55, 58, 59, 64, 65, 68, and 74. A disulfide bridge connects residues Cys56 and Cys61. The EGF-like 1; calcium-binding domain maps to 85-121 (DGDQCASNPCQNGGSCEDQIQSYICFCLADFEGRNCE). Disulfide bonds link Cys89-Cys100, Cys94-Cys109, Cys111-Cys120, Cys130-Cys141, Cys137-Cys151, Cys153-Cys166, Cys174-Cys301, Cys198-Cys203, and Cys217-Cys233. Ser91 carries O-linked (Glc...) serine; alternate glycosylation. A glycan (O-linked (Xyl...) serine; alternate) is linked at Ser91. Residue Ser99 is glycosylated (O-linked (Fuc) serine). Asp102 carries the post-translational modification (3R)-3-hydroxyaspartate. The region spanning 126 to 167 (DQLICMYENGGCEQYCSDHVGSQRSCRCHEGYTLLPNGVSCT) is the EGF-like 2 domain. One can recognise a Peptidase S1 domain in the interval 192–431 (IVGGKVCPKG…YTEWLSRLMR (240 aa)). Residue Asn211 is glycosylated (N-linked (GlcNAc...) asparagine). The Charge relay system role is filled by His232. Asn242 carries an N-linked (GlcNAc...) asparagine glycan. Asp281 acts as the Charge relay system in catalysis. Asn306 carries N-linked (GlcNAc...) asparagine glycosylation. Cys349 and Cys368 are disulfide-bonded. Asp377 contributes to the substrate binding site. Residues Cys379 and Cys407 are joined by a disulfide bond. The active-site Charge relay system is Ser383.

Belongs to the peptidase S1 family. In terms of assembly, heterodimer of a light chain and a heavy chain linked by a disulfide bond. In terms of processing, the vitamin K-dependent, enzymatic carboxylation of some glutamate residues allows the modified protein to bind calcium. The iron and 2-oxoglutarate dependent 3-hydroxylation of aspartate and asparagine is (R) stereospecific within EGF domains. Post-translationally, O-glycosylated. O-fucosylated by POFUT1 on a conserved serine or threonine residue found in the consensus sequence C2-X(4,5)-[S/T]-C3 of EGF domains, where C2 and C3 are the second and third conserved cysteines. In terms of processing, can be either O-glucosylated or O-xylosylated at Ser-91 by POGLUT1. In terms of tissue distribution, plasma.

The protein resides in the secreted. It catalyses the reaction Selective cleavage of Arg-|-Ile bond in factor X to form factor Xa.. Its function is as follows. Initiates the extrinsic pathway of blood coagulation. Serine protease that circulates in the blood in a zymogen form. Factor VII is converted to factor VIIa by factor Xa, factor XIIa, factor IXa, or thrombin by minor proteolysis. In the presence of tissue factor and calcium ions, factor VIIa then converts factor X to factor Xa by limited proteolysis. Factor VIIa also converts factor IX to factor IXa in the presence of tissue factor and calcium. This chain is Coagulation factor VII (F7), found in Oryctolagus cuniculus (Rabbit).